Here is a 491-residue protein sequence, read N- to C-terminus: NADH-quinone oxidoreductase subunit N 1 (491 aa).

A run of 14 helical transmembrane segments spans residues 9 to 29, 38 to 58, 76 to 96, 104 to 124, 126 to 146, 161 to 181, 211 to 231, 246 to 266, 276 to 296, 304 to 324, 329 to 349, 375 to 395, 410 to 432, and 461 to 481; these read IAAP…LDLL, PMYV…VPLW, FAAV…LLSF, SGYL…GGAG, LMVI…MIAF, FVLG…IYGA, VGVG…PFHI, AFMA…LLVA, FLLP…TVGI, LMAY…PGLG, SAAA…FAVV, VGVC…TGGF, AWIV…LKVI, and VVLA…GPVS.

This sequence belongs to the complex I subunit 2 family. In terms of assembly, NDH-1 is composed of 14 different subunits. Subunits NuoA, H, J, K, L, M, N constitute the membrane sector of the complex.

The protein localises to the cell membrane. It catalyses the reaction a quinone + NADH + 5 H(+)(in) = a quinol + NAD(+) + 4 H(+)(out). NDH-1 shuttles electrons from NADH, via FMN and iron-sulfur (Fe-S) centers, to quinones in the respiratory chain. The immediate electron acceptor for the enzyme in this species is believed to be a menaquinone. Couples the redox reaction to proton translocation (for every two electrons transferred, four hydrogen ions are translocated across the cytoplasmic membrane), and thus conserves the redox energy in a proton gradient. The polypeptide is NADH-quinone oxidoreductase subunit N 1 (Symbiobacterium thermophilum (strain DSM 24528 / JCM 14929 / IAM 14863 / T)).